The chain runs to 135 residues: Large ribosomal subunit protein mL41 (135 aa).

A mitochondrion-targeting transit peptide spans 1-13 (MGVLSALARGFVR).

The protein belongs to the mitochondrion-specific ribosomal protein mL41 family. In terms of assembly, component of the mitochondrial ribosome large subunit (39S) which comprises a 16S rRNA and about 50 distinct proteins.

The protein localises to the mitochondrion. Component of the mitochondrial ribosome large subunit. Also involved in apoptosis and cell cycle. The protein is Large ribosomal subunit protein mL41 (mrpl41) of Danio rerio (Zebrafish).